A 386-amino-acid chain; its full sequence is Succinate--CoA ligase [ADP-forming] subunit beta (386 aa).

Residues 9–244 (KEILRKYGVP…HDEEDPLETR (236 aa)) enclose the ATP-grasp domain. ATP contacts are provided by residues Lys46, 53 to 55 (GRG), Glu99, Cys102, and Glu107. Mg(2+) is bound by residues Asn199 and Asp213. Substrate-binding positions include Asn264 and 321-323 (GIM).

It belongs to the succinate/malate CoA ligase beta subunit family. In terms of assembly, heterotetramer of two alpha and two beta subunits. It depends on Mg(2+) as a cofactor.

It catalyses the reaction succinate + ATP + CoA = succinyl-CoA + ADP + phosphate. It carries out the reaction GTP + succinate + CoA = succinyl-CoA + GDP + phosphate. It participates in carbohydrate metabolism; tricarboxylic acid cycle; succinate from succinyl-CoA (ligase route): step 1/1. Its function is as follows. Succinyl-CoA synthetase functions in the citric acid cycle (TCA), coupling the hydrolysis of succinyl-CoA to the synthesis of either ATP or GTP and thus represents the only step of substrate-level phosphorylation in the TCA. The beta subunit provides nucleotide specificity of the enzyme and binds the substrate succinate, while the binding sites for coenzyme A and phosphate are found in the alpha subunit. In Rickettsia akari (strain Hartford), this protein is Succinate--CoA ligase [ADP-forming] subunit beta.